Reading from the N-terminus, the 106-residue chain is MQLRVERKFETFSYLPPLNDQQIARQLQYALSNGYSPAIEFSFTGKAEDLVWTLWKLPLFGAQSPEEVLSEIQACKQQFPNAYIRVVAFDSIRQVQTLMFLVYKPL.

This sequence belongs to the RuBisCO small chain family. Heterohexadecamer of 8 large and 8 small subunits.

It is found in the plastid. The protein resides in the cyanelle. In terms of biological role, ruBisCO catalyzes two reactions: the carboxylation of D-ribulose 1,5-bisphosphate, the primary event in carbon dioxide fixation, as well as the oxidative fragmentation of the pentose substrate. Both reactions occur simultaneously and in competition at the same active site. Although the small subunit is not catalytic it is essential for maximal activity. In Cyanophora paradoxa, this protein is Ribulose bisphosphate carboxylase small subunit.